The primary structure comprises 263 residues: Small ribosomal subunit protein eS4 (263 aa).

An S4 RNA-binding domain is found at 42 to 104; the sequence is LPLIIFLRNR…TGEHFRLVYD (63 aa).

Belongs to the eukaryotic ribosomal protein eS4 family.

This is Small ribosomal subunit protein eS4 (RPS4) from Gallus gallus (Chicken).